Reading from the N-terminus, the 216-residue chain is LexA repressor 1 (216 aa).

Residues 38–58 (TRQIGAAVGLRSMSSVARHLR) constitute a DNA-binding region (H-T-H motif). Catalysis depends on for autocatalytic cleavage activity residues serine 140 and lysine 177.

The protein belongs to the peptidase S24 family. In terms of assembly, homodimer.

The catalysed reaction is Hydrolysis of Ala-|-Gly bond in repressor LexA.. Its function is as follows. Represses a number of genes involved in the response to DNA damage (SOS response), including recA and lexA. In the presence of single-stranded DNA, RecA interacts with LexA causing an autocatalytic cleavage which disrupts the DNA-binding part of LexA, leading to derepression of the SOS regulon and eventually DNA repair. The polypeptide is LexA repressor 1 (Nocardia farcinica (strain IFM 10152)).